A 1451-amino-acid polypeptide reads, in one-letter code: ARF guanine-nucleotide exchange factor GNOM (1451 aa).

Residues 1–246 (MGRLKLHSGI…VNRAGSIKQE (246 aa)) are DCB domain. One can recognise an SEC7 domain in the interval 557–752 (RRKYIKRRLM…NEIRTTPEQG (196 aa)). The active site involves Glu-658. The interval 1430-1451 (SQLGDDETVSNGLSSPENTTGS) is disordered.

As to quaternary structure, homodimer. Interacts with CYP19-4/CYP5 in vitro. As to expression, stems, leaves, flowers, siliques, floral inflorescence and roots. Expressed in the whole plant (at the protein level).

It localises to the cytoplasm. Its subcellular location is the cytosol. The protein localises to the endosome membrane. The protein resides in the cell membrane. With respect to regulation, inhibited by brefeldin A (BFA). Its function is as follows. Activates the ARF proteins by exchanging bound GDP for free GTP. Plays a role in vesicular protein sorting. Acts as the major regulator of endosomal vesicle trafficking but is also involved in the endocytosis process. Could function redundantly with GNL1 in the retrograde Golgi to endoplasmic reticulum trafficking. Regulates vesicle trafficking required for the coordinated polar localization of auxin efflux carriers which in turn determines the direction of auxin flow. Mediates the sorting of PIN1 from endosomal compartments to the basal plasma membrane and the polarization of PIN3 to the bottom side of hypocotyl endodermal cells. Involved in the specification of apical-basal pattern formation in the early embryo and during root formation. Required for correct cell wall organization leading to normal cell adhesion during seedling development. Also plays an essential role in hydrotropism of seedling roots. In Arabidopsis thaliana (Mouse-ear cress), this protein is ARF guanine-nucleotide exchange factor GNOM (GN).